A 316-amino-acid polypeptide reads, in one-letter code: Ribosomal RNA small subunit methyltransferase H (316 aa).

Residues 32–34 (AGH), D52, F79, D106, and Q113 each bind S-adenosyl-L-methionine.

The protein belongs to the methyltransferase superfamily. RsmH family.

It localises to the cytoplasm. The enzyme catalyses cytidine(1402) in 16S rRNA + S-adenosyl-L-methionine = N(4)-methylcytidine(1402) in 16S rRNA + S-adenosyl-L-homocysteine + H(+). In terms of biological role, specifically methylates the N4 position of cytidine in position 1402 (C1402) of 16S rRNA. In Paenibacillus sp. (strain JDR-2), this protein is Ribosomal RNA small subunit methyltransferase H.